Reading from the N-terminus, the 372-residue chain is tRNA-specific 2-thiouridylase MnmA (372 aa).

Residues 9 to 16 (GMSGGVDS) and Met35 each bind ATP. The interval 95 to 97 (NPD) is interaction with target base in tRNA. Residue Cys100 is the Nucleophile of the active site. A disulfide bond links Cys100 and Cys201. Residue Gly124 participates in ATP binding. Residues 151 to 153 (KDQ) are interaction with tRNA. Residue Cys201 is the Cysteine persulfide intermediate of the active site. An interaction with tRNA region spans residues 317 to 318 (RY).

Belongs to the MnmA/TRMU family.

The protein resides in the cytoplasm. It carries out the reaction S-sulfanyl-L-cysteinyl-[protein] + uridine(34) in tRNA + AH2 + ATP = 2-thiouridine(34) in tRNA + L-cysteinyl-[protein] + A + AMP + diphosphate + H(+). Catalyzes the 2-thiolation of uridine at the wobble position (U34) of tRNA, leading to the formation of s(2)U34. The polypeptide is tRNA-specific 2-thiouridylase MnmA (Janthinobacterium sp. (strain Marseille) (Minibacterium massiliensis)).